A 302-amino-acid chain; its full sequence is Diacetylchitobiose uptake system permease protein NgcG (302 aa).

6 helical membrane passes run 40 to 60 (LLIL…MSSF), 99 to 119 (VIVV…CAYV), 131 to 151 (IYYV…VPLF), 166 to 186 (LILT…YSFF), 221 to 241 (AAVA…PVAL), and 268 to 288 (GALF…YCVF). The region spanning 95–288 (FLNSVIVVVS…VPVLLVYCVF (194 aa)) is the ABC transmembrane type-1 domain.

The protein belongs to the binding-protein-dependent transport system permease family. As to quaternary structure, the complex is composed of two ATP-binding proteins (MsiK), two transmembrane proteins (NgcF and NgcG) and a solute-binding protein (NgcE).

The protein resides in the cell membrane. Part of the ABC transporter complex NgcEFG-MsiK involved in N,N'-diacetylchitobiose ((GlcNAc)2) uptake. Responsible for the translocation of the substrate across the membrane. This chain is Diacetylchitobiose uptake system permease protein NgcG, found in Streptomyces coelicolor (strain ATCC BAA-471 / A3(2) / M145).